We begin with the raw amino-acid sequence, 552 residues long: Probable ABC transporter ATP-binding/permease protein HI_0664 (552 aa).

The next 6 membrane-spanning stretches (helical) occupy residues 22–42 (IMAFTITMGTLGFLAAIFIMV), 52–72 (LNFDTHLSFSGILTALIVLAV), 139–159 (IAPIMIAFFTSAILLLVFAQL), 162–182 (WFVLVALAAYLTVGVILPIIT), 253–273 (EVAVSVFNIIMLFTGLILFSL), and 278–298 (FAAFLIGVILLMSSYGPVIAL). An ABC transmembrane type-1 domain is found at 23-307 (MAFTITMGTL…LSNLSSNLLQ (285 aa)). The region spanning 340-552 (IDVENVNFAY…VIGIENGRMS (213 aa)) is the ABC transporter domain. 372–379 (GRSGSGKS) is an ATP binding site.

Belongs to the ABC transporter superfamily. Lipid exporter (TC 3.A.1.106) family.

Its subcellular location is the cell inner membrane. This Haemophilus influenzae (strain ATCC 51907 / DSM 11121 / KW20 / Rd) protein is Probable ABC transporter ATP-binding/permease protein HI_0664.